Reading from the N-terminus, the 430-residue chain is MDTIIKTQIIDLIHREVIPAIGCTEPIAVALAAAKAAEVLGRKPEKIEVYLSANILKNAMGVGIPGTGMVGLPIAIALGSIIGKSAYGLEVLKDLTSEGLKEGKEMVCKKCIGIDLKENVDKLYIEIISSAGNDRSRVIICHEHTHIIYVEKNGEVLTDLRTANASGEEVCENKDLRLSFSMVYEFAMEMPLDEIRFILETAELNKKAAQASMKGNYGHTVSKTVSGAFGRKFMGDSAYTHMLIMTSAACDARMDGAMIPVMSNSGSGNQGIAATLPVLSFAEDIQCSEEQLIRALMLSHLMVIYIKQSLGRLSALCGCVVAATGASCAITYLMGGNKARISYAIKNMIGNITGMICDGAKPSCAMKVSSGVSTAMLSALMAMEDKVVTSVEGIIDEDVDKSIANLTAIGSKGMEATDRLVLDIMTGKSC.

The protein belongs to the UPF0597 family.

The sequence is that of UPF0597 protein BDI_1130 from Parabacteroides distasonis (strain ATCC 8503 / DSM 20701 / CIP 104284 / JCM 5825 / NCTC 11152).